Here is a 369-residue protein sequence, read N- to C-terminus: Flagellar P-ring protein (369 aa).

The N-terminal stretch at 1 to 24 (MSKTISLLKFIICILISLCSFTYA) is a signal peptide.

The protein belongs to the FlgI family. The basal body constitutes a major portion of the flagellar organelle and consists of four rings (L,P,S, and M) mounted on a central rod.

It localises to the bacterial flagellum basal body. In terms of biological role, assembles around the rod to form the L-ring and probably protects the motor/basal body from shearing forces during rotation. This chain is Flagellar P-ring protein, found in Buchnera aphidicola subsp. Schizaphis graminum (strain Sg).